A 337-amino-acid polypeptide reads, in one-letter code: Putative tRNA (cytidine(32)/guanosine(34)-2'-O)-methyltransferase (337 aa).

Gly53, Trp55, Asp76, Asp92, and Asp117 together coordinate S-adenosyl-L-methionine. Lys157 (proton acceptor) is an active-site residue. Composition is skewed to basic and acidic residues over residues 304–318 and 327–337; these read LKAELSRGKDQKKTP and ELEKAAEKFQL. The interval 304 to 337 is disordered; that stretch reads LKAELSRGKDQKKTPAENVPSVEELEKAAEKFQL.

It belongs to the class I-like SAM-binding methyltransferase superfamily. RNA methyltransferase RlmE family. TRM7 subfamily.

It localises to the cytoplasm. The enzyme catalyses cytidine(32)/guanosine(34) in tRNA + 2 S-adenosyl-L-methionine = 2'-O-methylcytidine(32)/2'-O-methylguanosine(34) in tRNA + 2 S-adenosyl-L-homocysteine + 2 H(+). Functionally, methylates the 2'-O-ribose of nucleotides at positions 32 and 34 of the tRNA anticodon loop of substrate tRNAs. The chain is Putative tRNA (cytidine(32)/guanosine(34)-2'-O)-methyltransferase from Caenorhabditis elegans.